A 131-amino-acid polypeptide reads, in one-letter code: Riboflavin kinase (131 aa).

Position 11–16 (11–16 (GLQKAG)) interacts with CDP. Mg(2+)-binding residues include threonine 40 and asparagine 42. The FMN site is built by threonine 98 and glutamate 106. 111 to 114 (EKLR) is a binding site for CDP.

It belongs to the archaeal riboflavin kinase family. Mg(2+) serves as cofactor.

The catalysed reaction is riboflavin + CTP = CDP + FMN + H(+). It functions in the pathway cofactor biosynthesis; FMN biosynthesis; FMN from riboflavin (CTP route): step 1/1. Its function is as follows. Catalyzes the CTP-dependent phosphorylation of riboflavin (vitamin B2) to form flavin mononucleotide (FMN). The chain is Riboflavin kinase from Methanosphaera stadtmanae (strain ATCC 43021 / DSM 3091 / JCM 11832 / MCB-3).